The primary structure comprises 90 residues: MSDAHGIARDQLRAFIERIERLEEEKKTIADDIKDVYGEAKSMGFDAKILRKVISIRKQDADERMEQEAILDTYLQALGMIPAVEAEDAA.

The protein belongs to the UPF0335 family.

The sequence is that of UPF0335 protein R02793 from Rhizobium meliloti (strain 1021) (Ensifer meliloti).